Here is a 323-residue protein sequence, read N- to C-terminus: tRNA U34 carboxymethyltransferase (323 aa).

Carboxy-S-adenosyl-L-methionine contacts are provided by residues Lys-91, Trp-105, Lys-110, Gly-130, 152 to 154, 181 to 182, Met-196, Tyr-200, and Arg-315; these read DPS and IE.

The protein belongs to the class I-like SAM-binding methyltransferase superfamily. CmoB family. As to quaternary structure, homotetramer.

The catalysed reaction is carboxy-S-adenosyl-L-methionine + 5-hydroxyuridine(34) in tRNA = 5-carboxymethoxyuridine(34) in tRNA + S-adenosyl-L-homocysteine + H(+). Its function is as follows. Catalyzes carboxymethyl transfer from carboxy-S-adenosyl-L-methionine (Cx-SAM) to 5-hydroxyuridine (ho5U) to form 5-carboxymethoxyuridine (cmo5U) at position 34 in tRNAs. The polypeptide is tRNA U34 carboxymethyltransferase (Vibrio vulnificus (strain CMCP6)).